Here is a 61-residue protein sequence, read N- to C-terminus: Double gene block protein 2 (61 aa).

At 1 to 12 (MACCRCDSSPGD) the chain is on the cytoplasmic side. The chain crosses the membrane as a helical; Signal-anchor for type II membrane protein span at residues 13 to 33 (YSGALLILFISFVFFYITSLS). The Lumenal segment spans residues 34–61 (PQGNTYVHHFDSSSVKTQYVGISTNGDG).

The protein belongs to the gammacarmovirus double gene block protein 2 family.

It is found in the host endoplasmic reticulum membrane. In terms of biological role, cell-to-cell movement function. This Melon necrotic spot virus (MNSV) protein is Double gene block protein 2.